The following is a 228-amino-acid chain: Ribonuclease S-1 (228 aa).

The N-terminal stretch at 1–27 (MGVTGMTYMFTMVFSLIVLILSSSTVG) is a signal peptide. Glutamine 36 serves as a coordination point for RNA. Cysteine 42 and cysteine 49 form a disulfide bridge. Histidine 60 serves as a coordination point for RNA. The Proton donor role is filled by histidine 60. Cysteine 75 and cysteine 119 are oxidised to a cystine. A glycan (N-linked (GlcNAc...) asparagine) is linked at asparagine 87. 98 to 99 (NV) contributes to the RNA binding site. N-linked (GlcNAc...) asparagine glycosylation occurs at asparagine 101. Residues phenylalanine 108, 111-112 (KE), and 115-116 (KH) contribute to the RNA site. Residue glutamate 112 is part of the active site. Catalysis depends on histidine 116, which acts as the Proton acceptor. 3 N-linked (GlcNAc...) asparagine glycosylation sites follow: asparagine 144, asparagine 157, and asparagine 175. 2 cysteine pairs are disulfide-bonded: cysteine 183-cysteine 222 and cysteine 199-cysteine 210.

It belongs to the RNase T2 family. In terms of processing, N-linked core structure at Asn-87 and Asn-101 contains xylose and fucose or consists of disaccharide (GlcNAc-GlcNAc). N-linked core structure at Asn-144 contains xylose.

The enzyme catalyses a ribonucleotidyl-ribonucleotide-RNA + H2O = a 3'-end 3'-phospho-ribonucleotide-RNA + a 5'-end dephospho-ribonucleoside-RNA + H(+). Self-incompatibility (SI) is the inherited ability of a flowering plant to prevent self-fertilization by discriminating between self and non-self pollen during pollination. In many species, self-incompatibility is controlled by the single, multiallelic locus S. The sequence is that of Ribonuclease S-1 from Pyrus pyrifolia (Chinese pear).